The following is a 35-amino-acid chain: Thionin NsW2 (35 aa).

Cystine bridges form between Cys4-Cys32, Cys12-Cys30, and Cys16-Cys26.

Post-translationally, contains 4 disulfide bonds.

It localises to the secreted. Its function is as follows. Antimicrobial peptide disrupting membranes. Has antibacterial against Gram-positive bacteria S.aureus (MIC=6.5 uM) and B.subtilis (MIC=3.25 uM) but not against Gram-negative bacterium E.coli. Has antifungal activity against C.albicans (MIC=3.25 uM). In Nigella sativa (Black cumin), this protein is Thionin NsW2.